The sequence spans 407 residues: Imidazolonepropionase (407 aa).

Residues His-68 and His-70 each coordinate Fe(3+). The Zn(2+) site is built by His-68 and His-70. Arg-77, Tyr-140, and His-173 together coordinate 4-imidazolone-5-propanoate. Position 140 (Tyr-140) interacts with N-formimidoyl-L-glutamate. His-238 is a binding site for Fe(3+). Position 238 (His-238) interacts with Zn(2+). Gln-241 provides a ligand contact to 4-imidazolone-5-propanoate. Position 313 (Asp-313) interacts with Fe(3+). A Zn(2+)-binding site is contributed by Asp-313. Positions 315 and 317 each coordinate N-formimidoyl-L-glutamate. Residue Thr-318 coordinates 4-imidazolone-5-propanoate.

It belongs to the metallo-dependent hydrolases superfamily. HutI family. Zn(2+) is required as a cofactor. The cofactor is Fe(3+).

Its subcellular location is the cytoplasm. It catalyses the reaction 4-imidazolone-5-propanoate + H2O = N-formimidoyl-L-glutamate. It functions in the pathway amino-acid degradation; L-histidine degradation into L-glutamate; N-formimidoyl-L-glutamate from L-histidine: step 3/3. In terms of biological role, catalyzes the hydrolytic cleavage of the carbon-nitrogen bond in imidazolone-5-propanoate to yield N-formimidoyl-L-glutamate. It is the third step in the universal histidine degradation pathway. The sequence is that of Imidazolonepropionase from Burkholderia ambifaria (strain ATCC BAA-244 / DSM 16087 / CCUG 44356 / LMG 19182 / AMMD) (Burkholderia cepacia (strain AMMD)).